We begin with the raw amino-acid sequence, 335 residues long: Mesoderm-specific transcript protein (335 aa).

2 helical membrane-spanning segments follow: residues 13 to 33 and 63 to 83; these read WWVQ…HIPP and VGVV…TSSY. The AB hydrolase-1 domain maps to 71 to 310; sequence IVVLLHGFPT…PRSTVSILDD (240 aa). The short motif at 98–103 is the RVIALD element; the sequence is RVIALD. Residue Asn-163 is glycosylated (N-linked (GlcNAc...) asparagine). A helical membrane pass occupies residues 266 to 286; it reads VGALASVSIPIHFIYGPLDPI.

It belongs to the AB hydrolase superfamily. In terms of tissue distribution, expressed in mesodermal tissues. Isoform 1 is exclusively expressed from the paternal allele in all fetal tissues and cell lines examined, whereas isoform 2 is preferentially expressed from the paternal allele in a tissue-type-specific manner.

The protein localises to the endoplasmic reticulum membrane. The chain is Mesoderm-specific transcript protein (Mest) from Mus musculus (Mouse).